The following is a 472-amino-acid chain: Carboxypeptidase Q (472 aa).

Positions 1 to 20 are cleaved as a signal peptide; it reads MRFLFFLFVAVVHLFSLGSG. Residues 21 to 44 constitute a propeptide that is removed on maturation; it reads KAIYKSGVSQRTFQEIKEEIANYE. An N-linked (GlcNAc...) asparagine glycan is attached at Asn-61. His-290 and Asp-302 together coordinate Zn(2+). Glu-336 acts as the Nucleophile in catalysis. Glu-337 is a binding site for Zn(2+). Asn-353 is a glycosylation site (N-linked (GlcNAc...) asparagine). Asp-364 is a Zn(2+) binding site. Asn-396 carries an N-linked (GlcNAc...) asparagine glycan. Residue His-434 participates in Zn(2+) binding.

It belongs to the peptidase M28 family. Homodimer. The monomeric form is inactive while the homodimer is active. Post-translationally, N-glycosylated. The secreted form is modified by hybrid or complex type oligosaccharide chains.

It is found in the endoplasmic reticulum. The protein localises to the golgi apparatus. Its subcellular location is the lysosome. It localises to the secreted. In terms of biological role, carboxypeptidase that may play an important role in the hydrolysis of circulating peptides. Catalyzes the hydrolysis of dipeptides with unsubstituted terminals into amino acids. May play a role in the liberation of thyroxine hormone from its thyroglobulin (Tg) precursor. This is Carboxypeptidase Q (Cpq) from Rattus norvegicus (Rat).